The chain runs to 165 residues: Nucleotide-binding protein Syncc9605_0652 (165 aa).

This sequence belongs to the YajQ family.

Functionally, nucleotide-binding protein. In Synechococcus sp. (strain CC9605), this protein is Nucleotide-binding protein Syncc9605_0652.